The following is a 332-amino-acid chain: 2,3-diketo-L-gulonate reductase (332 aa).

His44 functions as the Proton donor in the catalytic mechanism. Residues 168-174 (ITMVDMS), 224-225 (WK), and 304-306 (GHE) contribute to the NAD(+) site.

This sequence belongs to the LDH2/MDH2 oxidoreductase family. DlgD subfamily. As to quaternary structure, homodimer.

It is found in the cytoplasm. The catalysed reaction is 3-dehydro-L-gulonate + NAD(+) = 2,3-dioxo-L-gulonate + NADH + H(+). It catalyses the reaction 3-dehydro-L-gulonate + NADP(+) = 2,3-dioxo-L-gulonate + NADPH + H(+). Its function is as follows. Catalyzes the reduction of 2,3-diketo-L-gulonate in the presence of NADH, to form 3-keto-L-gulonate. The chain is 2,3-diketo-L-gulonate reductase from Klebsiella oxytoca.